The following is a 129-amino-acid chain: Ribosome-binding factor A (129 aa).

It belongs to the RbfA family. In terms of assembly, monomer. Binds 30S ribosomal subunits, but not 50S ribosomal subunits or 70S ribosomes.

It is found in the cytoplasm. Functionally, one of several proteins that assist in the late maturation steps of the functional core of the 30S ribosomal subunit. Associates with free 30S ribosomal subunits (but not with 30S subunits that are part of 70S ribosomes or polysomes). Required for efficient processing of 16S rRNA. May interact with the 5'-terminal helix region of 16S rRNA. The protein is Ribosome-binding factor A of Pseudomonas aeruginosa (strain UCBPP-PA14).